The chain runs to 585 residues: Rab GTPase-binding effector protein 2 (585 aa).

A2 is modified (N-acetylalanine). Residues 27 to 183 (QEGAKVEAES…ELIQEIQRRP (157 aa)) adopt a coiled-coil conformation. Disordered stretches follow at residues 178 to 265 (EIQR…ASLV), 381 to 408 (ENQG…EESL), and 491 to 515 (EEQS…EEAQ). 4 positions are modified to phosphoserine: S188, S192, S198, and S202. Residues 288 to 540 (NQWEQLQLEG…QAELETSEQV (253 aa)) adopt a coiled-coil conformation. The segment covering 491–501 (EEQSKAKRQEV) has biased composition (basic and acidic residues).

It belongs to the rabaptin family. Heterodimer with RABGEF1. The dimer binds RAB5A that has been activated by GTP-binding. Interacts with SDCCAG8; this interaction is important for ciliogenesis regulation. Interacts with RAB4; this interaction may mediate VEGFR2 cell surface expression.

It localises to the cytoplasm. Its subcellular location is the early endosome. It is found in the cytoskeleton. The protein resides in the microtubule organizing center. The protein localises to the centrosome. It localises to the cilium basal body. Plays a role in membrane trafficking and in homotypic early endosome fusion. Participates in arteriogenesis by regulating vascular endothelial growth factor receptor 2/VEGFR2 cell surface expression and endosomal trafficking. By interacting with SDCCAG8, localizes to centrosomes and plays a critical role in ciliogenesis. The polypeptide is Rab GTPase-binding effector protein 2 (RABEP2) (Bos taurus (Bovine)).